A 206-amino-acid chain; its full sequence is Triafestin-1 (206 aa).

The signal sequence occupies residues 1–18 (MKTILAVIFFGILAFAFA). The N-linked (GlcNAc...) asparagine glycan is linked to asparagine 55.

It belongs to the calycin superfamily. Triabin family. Interacts with host coagulation factor XII (F12) (inactive and activated) (via amino acids 1-77). Interacts with host high molecular weight kininogen (KNG1) (via amino acids 402-532). In terms of tissue distribution, salivary gland (at protein level).

It is found in the secreted. Zn(2+) modulates binding to host coagulation factor XII (F12) and high molecular weight kininogen (KNG1). Functionally, suppresses activation of the host plasma kallikrein-kinin system, leading to inhibition of the intrinsic coagulation pathway. Blocks host coagulation factor XII (F12) and prekallikrein (KLKB1) reciprocal activation without affecting their amidolytic activities. Blocks binding of host F12 and high molecular weight kininogen (KNG1) to negatively charged surfaces. Attenuates generation of bradykinin by interfering with activation of host kallikrein-kinin system. The protein is Triafestin-1 of Triatoma infestans (Assassin bug).